Consider the following 247-residue polypeptide: Pyrroloquinoline-quinone synthase (247 aa).

This sequence belongs to the PqqC family.

It catalyses the reaction 6-(2-amino-2-carboxyethyl)-7,8-dioxo-1,2,3,4,7,8-hexahydroquinoline-2,4-dicarboxylate + 3 O2 = pyrroloquinoline quinone + 2 H2O2 + 2 H2O + H(+). It participates in cofactor biosynthesis; pyrroloquinoline quinone biosynthesis. Ring cyclization and eight-electron oxidation of 3a-(2-amino-2-carboxyethyl)-4,5-dioxo-4,5,6,7,8,9-hexahydroquinoline-7,9-dicarboxylic-acid to PQQ. The protein is Pyrroloquinoline-quinone synthase of Rhizobium rhizogenes (strain K84 / ATCC BAA-868) (Agrobacterium radiobacter).